Here is a 174-residue protein sequence, read N- to C-terminus: Streptothricin acetyltransferase (174 aa).

One can recognise an N-acetyltransferase domain in the interval 20-170; the sequence is FIVREVFDVH…AMYWYWFSGA (151 aa).

It belongs to the acetyltransferase family. GNAT subfamily.

The catalysed reaction is streptothricin F + acetyl-CoA = N(beta)-acetylstreptothricin F + CoA + H(+). In terms of biological role, involved in resistance to streptothricin, a broad-spectrum antibiotic produced by streptomycetes. Detoxifies streptothricin via acetylation of the beta amino group of the first beta-lysyl moiety of streptothricin. This Escherichia coli protein is Streptothricin acetyltransferase (sat-1).